We begin with the raw amino-acid sequence, 474 residues long: Ribulose bisphosphate carboxylase large chain (474 aa).

Substrate-binding residues include Asn-117 and Thr-167. Catalysis depends on Lys-169, which acts as the Proton acceptor. A substrate-binding site is contributed by Lys-171. 3 residues coordinate Mg(2+): Lys-195, Asp-197, and Glu-198. Lys-195 bears the N6-carboxylysine mark. His-288 acts as the Proton acceptor in catalysis. 3 residues coordinate substrate: Arg-289, His-321, and Ser-373.

The protein belongs to the RuBisCO large chain family. Type I subfamily. In terms of assembly, heterohexadecamer of 8 large chains and 8 small chains. The cofactor is Mg(2+).

The enzyme catalyses 2 (2R)-3-phosphoglycerate + 2 H(+) = D-ribulose 1,5-bisphosphate + CO2 + H2O. It carries out the reaction D-ribulose 1,5-bisphosphate + O2 = 2-phosphoglycolate + (2R)-3-phosphoglycerate + 2 H(+). Its function is as follows. RuBisCO catalyzes two reactions: the carboxylation of D-ribulose 1,5-bisphosphate, the primary event in carbon dioxide fixation, as well as the oxidative fragmentation of the pentose substrate. Both reactions occur simultaneously and in competition at the same active site. The polypeptide is Ribulose bisphosphate carboxylase large chain (Hydrogenophilus thermoluteolus (Pseudomonas hydrogenothermophila)).